The sequence spans 1461 residues: MEARSRSAEELRRAELVEIIVETEAQTGVSGINVAGGGKEGIFVRELREDSPAARSLSLQEGDQLLSARVFFENFKYEDALRLLQCAEPYKVSFCLKRTVPTGDLALRPGTVSGYEIKGPRAKVAKLNIQSLSPVKKKKMVPGALGVPADLAPVDVEFSFPKFSRLRRGLKAEAVKGPVPAAPARRRLQLPRLRVREVAEEAQAARLAAAAPPPRKAKVEAEVAAGARFTAPQVELVGPRLPGAEVGVPQVSAPKAAPSAEAAGGFALHLPTLGLGAPAPPAVEAPAVGIQVPQVELPALPSLPTLPTLPCLETREGAVSVVVPTLDVAAPTVGVDLALPGAEVEARGEAPEVALKMPRLSFPRFGARAKEVAEAKVAKVSPEARVKGPRLRMPTFGLSLLEPRPAAPEVVESKLKLPTIKMPSLGIGVSGPEVKVPKGPEVKLPKAPEVKLPKVPEAALPEVRLPEVELPKVSEMKLPKVPEMAVPEVRLPEVELPKVSEMKLPKVPEMAVPEVRLPEVQLLKVSEMKLPKVPEMAVPEVRLPEVQLPKVSEMKLPEVSEVAVPEVRLPEVQLPKVPEMKVPEMKLPKVPEMKLPEMKLPEVQLPKVPEMAVPDVHLPEVQLPKVPEMKLPEMKLPEVKLPKVPEMAVPDVHLPEVQLPKVPEMKLPKMPEMAVPEVRLPEVQLPKVSEMKLPKVPEMAVPDVHLPEVQLPKVCEMKVPDMKLPEIKLPKVPEMAVPDVHLPEVQLPKVSEIRLPEMQVPKVPDVHLPKAPEVKLPRAPEVQLKATKAEQAEGMEFGFKMPKMTMPKLGRAESPSRGKPGEAGAEVSGKLVTLPCLQPEVDGEAHVGVPSLTLPSVELDLPGALGLQGQVPAAKMGKGERVEGPEVAAGVREVGFRVPSVEIVTPQLPAVEIEEGRLEMIETKVKPSSKFSLPKFGLSGPKVAKAEAEGAGRATKLKVSKFAISLPKARVGAEAEAKGAGEAGLLPALDLSIPQLSLDAHLPSGKVEVAGADLKFKGPRFALPKFGVRGRDTEAAELVPGVAELEGKGWGWDGRVKMPKLKMPSFGLARGKEAEVQGDRASPGEKAESTAVQLKIPEVELVTLGAQEEGRAEGAVAVSGMQLSGLKVSTAGQVVTEGHDAGLRMPPLGISLPQVELTGFGEAGTPGQQAQSTVPSAEGTAGYRVQVPQVTLSLPGAQVAGGELLVGEGVFKMPTVTVPQLELDVGLSREAQAGEAATGEGGLRLKLPTLGARARVGGEGAEEQPPGAERTFCLSLPDVELSPSGGNHAEYQVAEGEGEAGHKLKVRLPRFGLVRAKEGAEEGEKAKSPKLRLPRVGFSQSEMVTGEGSPSPEEEEEEEEEGSGEGASGRRGRVRVRLPRVGLAAPSKASRGQEGDAAPKSPVREKSPKFRFPRVSLSPKARSGSGDQEEGGLRVRLPSVGFSETGAPGPARMEGAQAAAV.

Serine 7 is modified (phosphoserine). Residues 16 to 99 (LVEIIVETEA…YKVSFCLKRT (84 aa)) enclose the PDZ domain. Positions 70-84 (VFFENFKYEDALRLL) match the Nuclear export signal motif. A Nuclear localization signal motif is present at residues 118 to 196 (KGPRAKVAKL…RLQLPRLRVR (79 aa)). Serine 133 bears the Phosphoserine mark. 55 tandem repeats follow at residues 431–435 (GPEVK), 439–443 (GPEVK), 447–451 (APEVK), 455–459 (VPEAA), 463–467 (VRLPE), 468–472 (VELPK), 473–477 (VSEMK), 481–485 (VPEMA), 486–490 (VPEVR), 494–498 (VELPK), 499–503 (VSEMK), 507–511 (VPEMA), 512–516 (VPEVR), 520–524 (VQLLK), 525–529 (VSEMK), 533–537 (VPEMA), 538–542 (VPEVR), 546–550 (VQLPK), 551–555 (VSEMK), 559–563 (VSEVA), 564–568 (VPEVR), 572–576 (VQLPK), 577–581 (VPEMK), 582–586 (VPEMK), 590–594 (VPEMK), 595–599 (LPEMK), 600–604 (LPEVQ), 608–612 (VPEMA), 613–617 (VPDVH), 618–622 (LPEVQ), 626–630 (VPEMK), 631–635 (LPEMK), 636–640 (LPEVK), 644–648 (VPEMA), 649–653 (VPDVH), 654–658 (LPEVQ), 662–666 (VPEMK), 670–674 (MPEMA), 675–679 (VPEVR), 683–687 (VQLPK), 688–692 (VSEMK), 696–700 (VPEMA), 701–705 (VPDVH), 706–710 (LPEVQ), 714–718 (VCEMK), 719–723 (VPDMK), 724–728 (LPEIK), 732–736 (VPEMA), 737–741 (VPDVH), 742–746 (LPEVQ), 750–754 (VSEIR), 755–759 (LPEMQ), 760–764 (VPKVP), 771–775 (APEVK), and 779–783 (APEVQ). The interval 431–783 (GPEVKVPKGP…VKLPRAPEVQ (353 aa)) is 55 X 5 AA approximate tandem repeats of [LVMAG]-[PSREQC]-[EDKL]-[LIVMAP]-[AQKHRPE]; that may have a tripeptide spacer of [LV]-P-[KER]. Serine 900 and serine 1082 each carry phosphoserine. The segment covering 1318–1327 (EGAEEGEKAK) has biased composition (basic and acidic residues). Residues 1318 to 1461 (EGAEEGEKAK…RMEGAQAAAV (144 aa)) form a disordered region. 6 positions are modified to phosphoserine: serine 1349, serine 1351, serine 1363, serine 1401, serine 1407, and serine 1439. Over residues 1352–1363 (PEEEEEEEEEGS) the composition is skewed to acidic residues.

Belongs to the periaxin family. In terms of assembly, homodimer (via PDZ domain). Interacts with SCN10A. Found in a complex with SCN10A. Interacts with DRP2. Identified in a dystroglycan complex that contains at least PRX, DRP2, UTRN, DMD and DAG1. Detected in a complex composed of at least EZR, AHNAK, PPL and PRX. Identified in a complex with EZR, AHNAK, BFSP1, BFSP2, ANK2, PLEC, VIM and spectrin. Detected in spinal cord. Isoform 1 and isoform 2 are found in sciatic nerve and Schwann cells.

It is found in the cell membrane. The protein resides in the nucleus. Its subcellular location is the cytoplasm. The protein localises to the cell junction. In terms of biological role, scaffolding protein that functions as part of a dystroglycan complex in Schwann cells, and as part of EZR and AHNAK-containing complexes in eye lens fiber cells. Required for the maintenance of the peripheral myelin sheath that is essential for normal transmission of nerve impulses and normal perception of sensory stimuli. Required for normal transport of MBP mRNA from the perinuclear to the paranodal regions. Required for normal remyelination after nerve injury. Required for normal elongation of Schwann cells and normal length of the internodes between the nodes of Ranvier. The demyelinated nodes of Ranvier permit saltatory transmission of nerve impulses; shorter internodes cause slower transmission of nerve impulses. Required for the formation of appositions between the abaxonal surface of the myelin sheath and the Schwann cell plasma membrane; the Schwann cell cytoplasm is restricted to regions between these appositions. Required for the formation of Cajal bands and of Schmidt-Lanterman incisures that correspond to short, cytoplasm-filled regions on myelinated nerves. Recruits DRP2 to the Schwann cell plasma membrane. Required for normal protein composition of the eye lens fiber cell plasma membrane and normal eye lens fiber cell morphology. This is Periaxin (PRX) from Homo sapiens (Human).